A 285-amino-acid polypeptide reads, in one-letter code: K88 fimbrial protein AD (285 aa).

The first 21 residues, 1–21 (MKKTLIALAIAASAASGMAHA), serve as a signal peptide directing secretion.

This sequence belongs to the fimbrial K88 protein family. K88 fimbria, 0.1-1 micrometer in length and 7 nanometers in diameter, is composed of about 100 identical subunits.

The protein localises to the fimbrium. Its function is as follows. K88 major fimbrial subunit. Fimbriae (also called pili), are polar filaments radiating from the surface of the bacterium to a length of 0.5-1.5 micrometers and numbering 100-300 per cell. They enable bacteria to colonize the epithelium of specific host organs. The protein is K88 fimbrial protein AD (faeG) of Escherichia coli.